The following is a 78-amino-acid chain: Major outer membrane lipoprotein Lpp (78 aa).

The signal sequence occupies residues 1–20 (MNRTKIVLGAVVLASTLLAG). The N-palmitoyl cysteine moiety is linked to residue cysteine 21. Cysteine 21 is lipidated: S-diacylglycerol cysteine. 2 consecutive repeats follow at residues 24–34 (TAKVDQLTSDI) and 38–48 (NAKVDQLSNDV). A coiled-coil region spans residues 27-75 (VDQLTSDIQTLNAKVDQLSNDVNAVHTDVQAAKDDAARANQRLDNQVRS). Position 78 is an N6-murein peptidoglycan lysine (lysine 78).

The protein belongs to the Lpp family. Homotrimer.

Its subcellular location is the cell outer membrane. It localises to the secreted. The protein localises to the cell wall. A highly abundant outer membrane lipoprotein that controls the distance between the inner and outer membranes. The only protein known to be covalently linked to the peptidoglycan network (PGN). Also non-covalently binds the PGN. The link between the cell outer membrane and PGN contributes to maintenance of the structural and functional integrity of the cell envelope, and maintains the correct distance between the PGN and the outer membrane. In Photorhabdus laumondii subsp. laumondii (strain DSM 15139 / CIP 105565 / TT01) (Photorhabdus luminescens subsp. laumondii), this protein is Major outer membrane lipoprotein Lpp.